A 918-amino-acid chain; its full sequence is Isoleucine--tRNA ligase (918 aa).

A 'HIGH' region motif is present at residues 59–69; the sequence is PYANGHLHIGH. An L-isoleucyl-5'-AMP-binding site is contributed by Glu-570. The 'KMSKS' region motif lies at 611–615; sequence KMSKS. Lys-614 serves as a coordination point for ATP. Residues Cys-893, Cys-896, Cys-908, and Cys-911 each coordinate Zn(2+).

This sequence belongs to the class-I aminoacyl-tRNA synthetase family. IleS type 1 subfamily. In terms of assembly, monomer. Requires Zn(2+) as cofactor.

Its subcellular location is the cytoplasm. The catalysed reaction is tRNA(Ile) + L-isoleucine + ATP = L-isoleucyl-tRNA(Ile) + AMP + diphosphate. Functionally, catalyzes the attachment of isoleucine to tRNA(Ile). As IleRS can inadvertently accommodate and process structurally similar amino acids such as valine, to avoid such errors it has two additional distinct tRNA(Ile)-dependent editing activities. One activity is designated as 'pretransfer' editing and involves the hydrolysis of activated Val-AMP. The other activity is designated 'posttransfer' editing and involves deacylation of mischarged Val-tRNA(Ile). The chain is Isoleucine--tRNA ligase from Campylobacter concisus (strain 13826).